The primary structure comprises 109 residues: Flagellar hook-basal body complex protein FliE (109 aa).

The protein belongs to the FliE family.

It localises to the bacterial flagellum basal body. The protein is Flagellar hook-basal body complex protein FliE of Pseudomonas fluorescens (strain Pf0-1).